We begin with the raw amino-acid sequence, 331 residues long: Ketol-acid reductoisomerase (NADP(+)) (331 aa).

The KARI N-terminal Rossmann domain maps to 2–182 (ARLYYDADAN…GGTRAGILET (181 aa)). Residues 25 to 28 (YGSQ), serine 51, serine 53, and 83 to 86 (DEVQ) contribute to the NADP(+) site. Residue histidine 108 is part of the active site. Position 134 (glycine 134) interacts with NADP(+). The 146-residue stretch at 183–328 (TFREETETDL…KDLRAMFSWT (146 aa)) folds into the KARI C-terminal knotted domain. Mg(2+) is bound by residues aspartate 191, glutamate 195, glutamate 227, and glutamate 231. Residue serine 252 coordinates substrate.

It belongs to the ketol-acid reductoisomerase family. Mg(2+) serves as cofactor.

The enzyme catalyses (2R)-2,3-dihydroxy-3-methylbutanoate + NADP(+) = (2S)-2-acetolactate + NADPH + H(+). It carries out the reaction (2R,3R)-2,3-dihydroxy-3-methylpentanoate + NADP(+) = (S)-2-ethyl-2-hydroxy-3-oxobutanoate + NADPH + H(+). It participates in amino-acid biosynthesis; L-isoleucine biosynthesis; L-isoleucine from 2-oxobutanoate: step 2/4. It functions in the pathway amino-acid biosynthesis; L-valine biosynthesis; L-valine from pyruvate: step 2/4. Functionally, involved in the biosynthesis of branched-chain amino acids (BCAA). Catalyzes an alkyl-migration followed by a ketol-acid reduction of (S)-2-acetolactate (S2AL) to yield (R)-2,3-dihydroxy-isovalerate. In the isomerase reaction, S2AL is rearranged via a Mg-dependent methyl migration to produce 3-hydroxy-3-methyl-2-ketobutyrate (HMKB). In the reductase reaction, this 2-ketoacid undergoes a metal-dependent reduction by NADPH to yield (R)-2,3-dihydroxy-isovalerate. The polypeptide is Ketol-acid reductoisomerase (NADP(+)) (Acaryochloris marina (strain MBIC 11017)).